A 612-amino-acid polypeptide reads, in one-letter code: uncharacterized protein (612 aa).

A coiled-coil region spans residues 39 to 100 (ERDHNLWEIE…KNISVKDLDE (62 aa)). The interval 219 to 241 (PLSSGESLPKKEEEVTKSPSFTL) is disordered. WD repeat units follow at residues 286-325 (TSTQCITHQPLPGSTPSFASGTENGVINVWRLDEDSNDNS), 337-376 (GHEGPVLCVCVPKATHHIFSGGHDGTIRCWSLPANQTSDS), 389-432 (GHED…FKIR), 434-470 (DSKQPLSMSVTDSRIAIAYNDGNVRFYDLDTQILVSQ), 483-523 (AVKD…LLAE), 526-565 (ISKVSLTGIAFAVNRPEFAISASDGRVFFLRQDDKLSTLE), and 574-612 (EEITDLSDILWINSPVDKLEHLIVGCKERISVYDRKYLP).

The protein localises to the cytoplasm. This is an uncharacterized protein from Schizosaccharomyces pombe (strain 972 / ATCC 24843) (Fission yeast).